Consider the following 638-residue polypeptide: MDRIIGIDLGTTNSCVSILENGNVKVIENAEGTRTTPSIIAYANDGEILVGQSAKRQAVTNPHNTLYAVKRLIGRKFEEDVVQKDIQMVPYKIVKADNGDAWVEVNGQKMAPPQISAEILKKMKKTAEDYLGEAVTEAVITVPAYFNDSQRQATKDAGRIASVDVKRIINEPTAAALAYGMDKAKGDHTVIVYDLGGGTFDVSVIEIAEVDGEHQFEVLATNGDTFLGGEDFDIRLIDYFVHEFKKESGMNLKGDPLAMQRLKEAAEKAKIELSSSTQTEVNLPYITADATGPKHLVVKISRSKLESLVEDLVQRTIAPCEMALKDAGIDRSKINDVILVGGQTRMPLVQKLVTEFFGKEARKDVNPDEAVAMGAAIQGAVLAGDVKDVLLLDVSPLTLGIEAMGGVMTALIKKTPRFLPRNPSVLTADDNQENAVAIHVLQGERKQAGQNKSLGKFDLAEIPPAPRGVPQIEVTFDIDANGILHVGAKDKATGKQQSIVIKANSGLSEEEIQQMVRDAEVNSEEDRKFEELASARNQGDALVHSTRKMIADAGDKVTAEQKTAVEAALVALEAAIKGDDKAAIEAKVEELSKVSAPIAQKMYAEQAENPEAAAKPAEENAKADDVVDAEFEEVKDHK.

Phosphothreonine; by autocatalysis is present on Thr199. The span at 605 to 615 shows a compositional bias: low complexity; it reads EQAENPEAAAK. The segment at 605–624 is disordered; the sequence is EQAENPEAAAKPAEENAKAD.

It belongs to the heat shock protein 70 family.

Its function is as follows. Acts as a chaperone. The protein is Chaperone protein DnaK (dnaK) of Pseudomonas savastanoi pv. glycinea (Pseudomonas syringae pv. glycinea).